The chain runs to 427 residues: Endothelin-1 receptor (427 aa).

The N-terminal stretch at 1–20 is a signal peptide; it reads METFCFRVSFWVALLGCVIS. At 21–80 the chain is on the extracellular side; that stretch reads DNPESHSTNLSTHVDDFTTFRGTEFSLVVTTHRPTNLALPSNGSMHNYCPQQTKITSAFK. N-linked (GlcNAc...) asparagine glycosylation is found at Asn-29 and Asn-62. Residues 81–102 form a helical membrane-spanning segment; it reads YINTVISCTIFIVGMVGNATLL. The Cytoplasmic segment spans residues 103 to 112; it reads RIIYQNKCMR. The chain crosses the membrane as a helical span at residues 113–132; that stretch reads NGPNALIASLALGDLIYVVI. The Extracellular segment spans residues 133 to 159; sequence DLPINVFKLLAGRWPFENHDFGVFLCK. The cysteines at positions 158 and 239 are disulfide-linked. Residues 160–181 traverse the membrane as a helical segment; the sequence is LFPFLQKSSVGITVLNLCALSV. Topologically, residues 182–205 are cytoplasmic; the sequence is DRYRAVASWSRVQGIGIPLVTAIE. The chain crosses the membrane as a helical span at residues 206-229; it reads IVSIWILSFILAIPEAIGFVMVPF. Topologically, residues 230 to 256 are extracellular; the sequence is EYKGEEHKTCMLNATSKFMEFYQDVKD. Residues 257–278 form a helical membrane-spanning segment; it reads WWLFGFYFCMPLVCTAIFYTLM. Topologically, residues 279 to 306 are cytoplasmic; it reads TCEMLNRRNGSLRIALSEHLKQRREVAK. Residues 307–328 traverse the membrane as a helical segment; the sequence is TVFCLVVIFALCWFPLHLSRIL. Topologically, residues 329-347 are extracellular; sequence KKTVYDEMDKNRCELLSFL. The chain crosses the membrane as a helical span at residues 348–372; that stretch reads LLMDYIGINLATMNSCINPIALYFV. The Cytoplasmic segment spans residues 373–427; that stretch reads SKKFKNCFQSCLCCCCYQSKSLMTSVPMNGTSIQWKNHEQNNHNTERSSHKDSIN. Position 425 is a phosphoserine (Ser-425).

This sequence belongs to the G-protein coupled receptor 1 family. Endothelin receptor subfamily. EDNRA sub-subfamily. As to quaternary structure, interacts with HDAC7 and KAT5.

Its subcellular location is the cell membrane. In terms of biological role, receptor for endothelin-1. Mediates its action by association with G proteins that activate a phosphatidylinositol-calcium second messenger system. The rank order of binding affinities for ET-A is: ET1 &gt; ET2 &gt;&gt; ET3. The sequence is that of Endothelin-1 receptor from Sus scrofa (Pig).